A 546-amino-acid polypeptide reads, in one-letter code: Chaperonin GroEL (546 aa).

Residues 30-33 (TLGP), K51, 87-91 (DGTTT), G415, 479-481 (NAA), and D495 contribute to the ATP site. The interval 527 to 546 (DESAAPAMPGGMGGMGDMGM) is disordered. A compositionally biased stretch (gly residues) spans 536-546 (GGMGGMGDMGM).

Belongs to the chaperonin (HSP60) family. Forms a cylinder of 14 subunits composed of two heptameric rings stacked back-to-back. Interacts with the co-chaperonin GroES.

The protein localises to the cytoplasm. The enzyme catalyses ATP + H2O + a folded polypeptide = ADP + phosphate + an unfolded polypeptide.. Together with its co-chaperonin GroES, plays an essential role in assisting protein folding. The GroEL-GroES system forms a nano-cage that allows encapsulation of the non-native substrate proteins and provides a physical environment optimized to promote and accelerate protein folding. In Acidovorax ebreus (strain TPSY) (Diaphorobacter sp. (strain TPSY)), this protein is Chaperonin GroEL.